Reading from the N-terminus, the 161-residue chain is Protein yippee-like B0546.4 (161 aa).

Residues 14-111 (SLYGCVVCNT…IENANFEKIA (98 aa)) form the Yippee domain. The Zn(2+) site is built by Cys-18, Cys-21, Cys-74, and Cys-77. Residues 117–161 (PLGEDRQEAPPAPNLEMSRYPLEAEKKSRPQYRTVSVSSSSSAEC) are disordered. The segment covering 151-161 (VSVSSSSSAEC) has biased composition (low complexity).

It belongs to the yippee family.

The chain is Protein yippee-like B0546.4 from Caenorhabditis elegans.